The sequence spans 339 residues: Dihydroorotate dehydrogenase (quinone) (339 aa).

Residues 64 to 68 (AGADK) and Thr88 contribute to the FMN site. Lys68 lines the substrate pocket. 113–117 (NRNGF) contacts substrate. FMN is bound by residues Asn141 and Asn174. Asn174 serves as a coordination point for substrate. Ser177 serves as the catalytic Nucleophile. Asn179 lines the substrate pocket. Residues Lys219 and Thr247 each coordinate FMN. Substrate is bound at residue 248–249 (NT). FMN is bound by residues Gly270, Gly299, and 320–321 (YS).

It belongs to the dihydroorotate dehydrogenase family. Type 2 subfamily. As to quaternary structure, monomer. FMN is required as a cofactor.

The protein resides in the cell membrane. The enzyme catalyses (S)-dihydroorotate + a quinone = orotate + a quinol. It functions in the pathway pyrimidine metabolism; UMP biosynthesis via de novo pathway; orotate from (S)-dihydroorotate (quinone route): step 1/1. Catalyzes the conversion of dihydroorotate to orotate with quinone as electron acceptor. The chain is Dihydroorotate dehydrogenase (quinone) from Haemophilus influenzae (strain 86-028NP).